A 488-amino-acid chain; its full sequence is 3-octaprenyl-4-hydroxybenzoate carboxy-lyase (488 aa).

Position 172 (Asn-172) interacts with Mn(2+). Prenylated FMN-binding positions include 175 to 177 (IYR), 189 to 191 (RWL), and 194 to 195 (RG). Glu-238 is a Mn(2+) binding site. Catalysis depends on Asp-287, which acts as the Proton donor.

This sequence belongs to the UbiD family. In terms of assembly, homohexamer. Prenylated FMN is required as a cofactor. It depends on Mn(2+) as a cofactor.

The protein resides in the cell membrane. It catalyses the reaction a 4-hydroxy-3-(all-trans-polyprenyl)benzoate + H(+) = a 2-(all-trans-polyprenyl)phenol + CO2. It participates in cofactor biosynthesis; ubiquinone biosynthesis. Functionally, catalyzes the decarboxylation of 3-octaprenyl-4-hydroxy benzoate to 2-octaprenylphenol, an intermediate step in ubiquinone biosynthesis. The chain is 3-octaprenyl-4-hydroxybenzoate carboxy-lyase from Legionella pneumophila subsp. pneumophila (strain Philadelphia 1 / ATCC 33152 / DSM 7513).